A 118-amino-acid chain; its full sequence is V-type proton ATPase subunit G 1 (118 aa).

At A2 the chain carries N-acetylalanine. The segment at 19-42 (AEKVSEARKRKNRRLKQAKEEAQA) is disordered.

It belongs to the V-ATPase G subunit family. As to quaternary structure, V-ATPase is a heteromultimeric enzyme made up of two complexes: the ATP-hydrolytic V1 complex and the proton translocation V0 complex. The V1 complex consists of three catalytic AB heterodimers that form a heterohexamer, three peripheral stalks each consisting of EG heterodimers, one central rotor including subunits D and F, and the regulatory subunits C and H. The proton translocation complex V0 consists of the proton transport subunit a, a ring of proteolipid subunits c9c'', rotary subunit d, subunits e and f, and the accessory subunits ATP6AP1/Ac45 and ATP6AP2/PRR. Brain, heart, kidney and spleen.

The protein localises to the apical cell membrane. Functionally, subunit of the V1 complex of vacuolar(H+)-ATPase (V-ATPase), a multisubunit enzyme composed of a peripheral complex (V1) that hydrolyzes ATP and a membrane integral complex (V0) that translocates protons. V-ATPase is responsible for acidifying and maintaining the pH of intracellular compartments and in some cell types, is targeted to the plasma membrane, where it is responsible for acidifying the extracellular environment. In aerobic conditions, involved in intracellular iron homeostasis, thus triggering the activity of Fe(2+) prolyl hydroxylase (PHD) enzymes, and leading to HIF1A hydroxylation and subsequent proteasomal degradation. This is V-type proton ATPase subunit G 1 (ATP6V1G1) from Bos taurus (Bovine).